We begin with the raw amino-acid sequence, 988 residues long: Kinesin-like protein CIN8 (988 aa).

In terms of domain architecture, Kinesin motor spans 33–470 (NILVAVRCRG…LEYASKAKNI (438 aa)). Position 125-132 (125-132 (GMTSTGKT)) interacts with ATP. The segment at 206 to 301 (FDSNVNGTSA…NSNNTNQQQS (96 aa)) is disordered. Over residues 208-237 (SNVNGTSASGSSSRSSSRNNSPRSAPDNSR) the composition is skewed to low complexity. The segment covering 248 to 280 (HNTTGNSKISNNNHNKFSRFKQTSQESTRAHAS) has biased composition (polar residues). The span at 281-301 (NNHQNVHIPNNNSNNTNQQQS) shows a compositional bias: low complexity. Coiled coils occupy residues 514 to 619 (EHYK…ELQQ) and 707 to 769 (KLAE…MQNF). The segment covering 965-974 (ALQEKRKPED) has biased composition (basic and acidic residues). The interval 965-988 (ALQEKRKPEDEVLLQAKLQRRNPD) is disordered.

Belongs to the TRAFAC class myosin-kinesin ATPase superfamily. Kinesin family. BimC subfamily.

The protein localises to the cytoplasm. It is found in the cytoskeleton. Its subcellular location is the spindle. Its function is as follows. Elongates the mitotic spindle by interacting with spindle microtubules to generate an outward force pushing spindle poles apart. Following spindle assembly, CIN8 and KIP1 apparently act to oppose a force, possibly generated by KAR3, that draws separated poles back together. This Candida glabrata (strain ATCC 2001 / BCRC 20586 / JCM 3761 / NBRC 0622 / NRRL Y-65 / CBS 138) (Yeast) protein is Kinesin-like protein CIN8 (CIN8).